Here is a 386-residue protein sequence, read N- to C-terminus: Skeletal aspartic acid-rich protein 1 (386 aa).

Residues 1–24 (MAFVSCFHLRLLFLCLALFMAAEC) form the signal peptide. Disordered stretches follow at residues 33–145 (VDSD…PFSL) and 244–291 (EVTD…DCPH). Acidic residues predominate over residues 63–107 (YDASDDNDNDNDDDDNNDNDNDNDDDNDVDRDNDNDDDDFDDSND). 2 stretches are compositionally biased toward basic and acidic residues: residues 133-142 (HSVESFEDRP) and 244-265 (EVTD…KDTP). Residues 266–288 (DTDSDPDDSSDNANDGDDDDDDD) are compositionally biased toward acidic residues.

Component of the acid-insoluble and acid-soluble organic matrix of the aragonitic skeleton (at protein level).

Its subcellular location is the secreted. The polypeptide is Skeletal aspartic acid-rich protein 1 (Acropora millepora (Staghorn coral)).